Here is a 453-residue protein sequence, read N- to C-terminus: tRNA modification GTPase MnmE (453 aa).

Arg-28, Glu-86, and Lys-125 together coordinate (6S)-5-formyl-5,6,7,8-tetrahydrofolate. The region spanning 221–375 (GIKIAIVGEP…LIKYLEETSL (155 aa)) is the TrmE-type G domain. Residue Asn-231 participates in K(+) binding. GTP-binding positions include 231-236 (NAGKSS), 250-256 (TNIPGTT), and 276-279 (DTAG). Ser-235 contacts Mg(2+). Thr-250, Ile-252, and Thr-255 together coordinate K(+). Residue Thr-256 participates in Mg(2+) binding. Lys-453 serves as a coordination point for (6S)-5-formyl-5,6,7,8-tetrahydrofolate.

This sequence belongs to the TRAFAC class TrmE-Era-EngA-EngB-Septin-like GTPase superfamily. TrmE GTPase family. In terms of assembly, homodimer. Heterotetramer of two MnmE and two MnmG subunits. K(+) serves as cofactor.

It is found in the cytoplasm. Exhibits a very high intrinsic GTPase hydrolysis rate. Involved in the addition of a carboxymethylaminomethyl (cmnm) group at the wobble position (U34) of certain tRNAs, forming tRNA-cmnm(5)s(2)U34. This is tRNA modification GTPase MnmE from Mycoplasmoides gallisepticum (strain R(low / passage 15 / clone 2)) (Mycoplasma gallisepticum).